The following is an 817-amino-acid chain: Trehalose-phosphatase (817 aa).

The segment at Met-1–Ile-547 is glycosyltransferase.

The protein in the N-terminal section; belongs to the glycosyltransferase 20 family. This sequence in the C-terminal section; belongs to the trehalose phosphatase family. In terms of assembly, component of the trehalose synthase complex that contains at least tps1, ntp1, and tpp1. Interacts with tps1. Interacts with ntp1. It depends on Mg(2+) as a cofactor.

The enzyme catalyses alpha,alpha-trehalose 6-phosphate + H2O = alpha,alpha-trehalose + phosphate. It participates in carbohydrate biosynthesis. In terms of biological role, phosphatase catalytic subunit of the trehalose synthase complex that catalyzes the production of trehalose from glucose-6-phosphate and UDP-alpha-D-glucose in a two step process. The disaccharide trehalose serves as a storage carbohydrate that is mobilized during nutrient stress and spore germination. Together with ntp1, regulates the level of trehalose as a protectant for cell integrity during thermal, osmotic, and oxidative stress. The protein is Trehalose-phosphatase of Schizosaccharomyces pombe (strain 972 / ATCC 24843) (Fission yeast).